The primary structure comprises 95 residues: Aspartyl/glutamyl-tRNA(Asn/Gln) amidotransferase subunit C (95 aa).

Belongs to the GatC family. Heterotrimer of A, B and C subunits.

It catalyses the reaction L-glutamyl-tRNA(Gln) + L-glutamine + ATP + H2O = L-glutaminyl-tRNA(Gln) + L-glutamate + ADP + phosphate + H(+). The catalysed reaction is L-aspartyl-tRNA(Asn) + L-glutamine + ATP + H2O = L-asparaginyl-tRNA(Asn) + L-glutamate + ADP + phosphate + 2 H(+). Functionally, allows the formation of correctly charged Asn-tRNA(Asn) or Gln-tRNA(Gln) through the transamidation of misacylated Asp-tRNA(Asn) or Glu-tRNA(Gln) in organisms which lack either or both of asparaginyl-tRNA or glutaminyl-tRNA synthetases. The reaction takes place in the presence of glutamine and ATP through an activated phospho-Asp-tRNA(Asn) or phospho-Glu-tRNA(Gln). The sequence is that of Aspartyl/glutamyl-tRNA(Asn/Gln) amidotransferase subunit C from Pseudomonas syringae pv. syringae (strain B728a).